The sequence spans 98 residues: Large ribosomal subunit protein eL21 (98 aa).

Belongs to the eukaryotic ribosomal protein eL21 family.

The polypeptide is Large ribosomal subunit protein eL21 (Methanocorpusculum labreanum (strain ATCC 43576 / DSM 4855 / Z)).